The chain runs to 79 residues: MSEVNAGEICYVKKQRKGTINPNKICQPIGAMWATVGVKGTIPFVQGSQGCTTYVRYAFNRHFREPVSIATASFHEHAA.

2 residues coordinate [8Fe-7S] cluster: Cys26 and Cys51.

It belongs to the NifD/NifK/NifE/NifN family. Tetramer of two alpha and two beta chains. Forms complex with the iron protein (nitrogenase component 2). The cofactor is [8Fe-7S] cluster.

The catalysed reaction is N2 + 8 reduced [2Fe-2S]-[ferredoxin] + 16 ATP + 16 H2O = H2 + 8 oxidized [2Fe-2S]-[ferredoxin] + 2 NH4(+) + 16 ADP + 16 phosphate + 6 H(+). In terms of biological role, this molybdenum-iron protein is part of the nitrogenase complex that catalyzes the key enzymatic reactions in nitrogen fixation. The sequence is that of Nitrogenase molybdenum-iron protein beta chain (nifK) from Methanothermococcus thermolithotrophicus (Methanococcus thermolithotrophicus).